A 449-amino-acid chain; its full sequence is Rubisco accumulation factor 1.2, chloroplastic (449 aa).

Residues 1 to 61 (MFSLKSLISS…NMIPKNPPAR (61 aa)) constitute a chloroplast transit peptide. The segment at 75 to 264 (IPTQFRSLDS…KAKNRLNTEL (190 aa)) is N-terminal alpha-helix. Residues 262–288 (TELYGDKEAEKEKEKKKKEEEVKAIRI) are a coiled coil. A C-terminal beta sheet region spans residues 288-434 (IPVVRLKFGE…GMVVLVVRPP (147 aa)).

The protein belongs to the RAF family. In terms of assembly, homodimer.

The protein resides in the plastid. The protein localises to the chloroplast. Functionally, required for assembly or stability of RuBisCO. Acts at a postchaperonin step to fold and/or assemble the large subunit (rbcL) into RuBisCO. RAF1 brackets an rbcL dimer (rbcL(2)), leading to rbcL(8)-RAF1(4) complex formation. In the next step, RBCS displaces RAF1, thus resulting in holoenzyme formation. This Arabidopsis thaliana (Mouse-ear cress) protein is Rubisco accumulation factor 1.2, chloroplastic.